A 495-amino-acid chain; its full sequence is uncharacterized protein (495 aa).

It is found in the cytoplasm. The protein resides in the nucleus. This is an uncharacterized protein from Saccharomyces cerevisiae (strain ATCC 204508 / S288c) (Baker's yeast).